The following is a 284-amino-acid chain: Tryptophan 2,3-dioxygenase (284 aa).

Residues 51–55 (FIIQH), tyrosine 113, and arginine 117 contribute to the substrate site. Residue histidine 240 coordinates heme. Threonine 254 is a binding site for substrate.

The protein belongs to the tryptophan 2,3-dioxygenase family. As to quaternary structure, homotetramer. The cofactor is heme.

It catalyses the reaction L-tryptophan + O2 = N-formyl-L-kynurenine. It functions in the pathway amino-acid degradation; L-tryptophan degradation via kynurenine pathway; L-kynurenine from L-tryptophan: step 1/2. Heme-dependent dioxygenase that catalyzes the oxidative cleavage of the L-tryptophan (L-Trp) pyrrole ring and converts L-tryptophan to N-formyl-L-kynurenine. Catalyzes the oxidative cleavage of the indole moiety. The chain is Tryptophan 2,3-dioxygenase from Rhodococcus jostii (strain RHA1).